The following is a 252-amino-acid chain: Adenosylcobinamide-GDP ribazoletransferase (252 aa).

The next 6 membrane-spanning stretches (helical) occupy residues leucine 29–valine 49, glycine 50–leucine 70, valine 104–valine 124, phenylalanine 129–leucine 149, phenylalanine 166–leucine 186, and phenylalanine 194–valine 214.

This sequence belongs to the CobS family. Mg(2+) serves as cofactor.

It is found in the cell inner membrane. The enzyme catalyses alpha-ribazole + adenosylcob(III)inamide-GDP = adenosylcob(III)alamin + GMP + H(+). The catalysed reaction is alpha-ribazole 5'-phosphate + adenosylcob(III)inamide-GDP = adenosylcob(III)alamin 5'-phosphate + GMP + H(+). Its pathway is cofactor biosynthesis; adenosylcobalamin biosynthesis; adenosylcobalamin from cob(II)yrinate a,c-diamide: step 7/7. Functionally, joins adenosylcobinamide-GDP and alpha-ribazole to generate adenosylcobalamin (Ado-cobalamin). Also synthesizes adenosylcobalamin 5'-phosphate from adenosylcobinamide-GDP and alpha-ribazole 5'-phosphate. The chain is Adenosylcobinamide-GDP ribazoletransferase from Chlorobium chlorochromatii (strain CaD3).